The sequence spans 371 residues: Cytochrome b (371 aa).

The next 4 membrane-spanning stretches (helical) occupy residues 25-45 (FGSM…FLAI), 69-90 (WIMQ…YIHI), 105-125 (WLSG…GYVL), and 170-190 (FFAL…IHIM). Heme b contacts are provided by His75 and His89. Residues His174 and His188 each coordinate heme b. His193 is an a ubiquinone binding site. The next 4 helical transmembrane spans lie at 218-238 (HKDI…MSFS), 280-300 (LGGT…PFTH), 312-332 (IMQL…WAAT), and 339-358 (FTII…IMNP).

The protein belongs to the cytochrome b family. The cytochrome bc1 complex contains 3 respiratory subunits (MT-CYB, CYC1 and UQCRFS1), 2 core proteins (UQCRC1 and UQCRC2) and probably 6 low-molecular weight proteins. Requires heme b as cofactor.

Its subcellular location is the mitochondrion inner membrane. Component of the ubiquinol-cytochrome c reductase complex (complex III or cytochrome b-c1 complex) that is part of the mitochondrial respiratory chain. The b-c1 complex mediates electron transfer from ubiquinol to cytochrome c. Contributes to the generation of a proton gradient across the mitochondrial membrane that is then used for ATP synthesis. In Coluber constrictor (Eastern racer), this protein is Cytochrome b (MT-CYB).